The primary structure comprises 459 residues: ATP synthase subunit beta (459 aa).

148–155 (GGAGVGKT) serves as a coordination point for ATP.

The protein belongs to the ATPase alpha/beta chains family. In terms of assembly, F-type ATPases have 2 components, CF(1) - the catalytic core - and CF(0) - the membrane proton channel. CF(1) has five subunits: alpha(3), beta(3), gamma(1), delta(1), epsilon(1). CF(0) has three main subunits: a(1), b(2) and c(9-12). The alpha and beta chains form an alternating ring which encloses part of the gamma chain. CF(1) is attached to CF(0) by a central stalk formed by the gamma and epsilon chains, while a peripheral stalk is formed by the delta and b chains.

It is found in the cell inner membrane. It catalyses the reaction ATP + H2O + 4 H(+)(in) = ADP + phosphate + 5 H(+)(out). In terms of biological role, produces ATP from ADP in the presence of a proton gradient across the membrane. The catalytic sites are hosted primarily by the beta subunits. The protein is ATP synthase subunit beta of Thioalkalivibrio sulfidiphilus (strain HL-EbGR7).